A 536-amino-acid polypeptide reads, in one-letter code: Lysosomal acid glucosylceramidase (536 aa).

Positions 1–39 (MEFSSPSREECPKPSGRVNIMAGSLTGLLLLQAVSWASG) are cleaved as a signal peptide. Cystine bridges form between C43-C55 and C57-C62. Residues N58, N98, and N185 are each glycosylated (N-linked (GlcNAc...) asparagine). The active-site Proton donor is E274. N309 carries an N-linked (GlcNAc...) asparagine glycan. E379 serves as the catalytic Nucleophile. Residue N501 is glycosylated (N-linked (GlcNAc...) asparagine).

The protein belongs to the glycosyl hydrolase 30 family. In terms of assembly, interacts with saposin-C. Interacts with SCARB2. Interacts with TCP1. Interacts with GRN; this interaction prevents aggregation of GBA1-SCARB2 complex via interaction with HSPA1A upon stress.

The protein localises to the lysosome membrane. It carries out the reaction a beta-D-glucosyl-(1&lt;-&gt;1')-N-acylsphing-4-enine + H2O = an N-acylsphing-4-enine + D-glucose. The catalysed reaction is a beta-D-galactosyl-(1&lt;-&gt;1')-N-acylsphing-4-enine + H2O = an N-acylsphing-4-enine + D-galactose. The enzyme catalyses cholesteryl 3-beta-D-glucoside + H2O = cholesterol + D-glucose. It catalyses the reaction a beta-D-glucosyl-(1&lt;-&gt;1')-N-acylsphing-4-enine + cholesterol = cholesteryl 3-beta-D-glucoside + an N-acylsphing-4-enine. It carries out the reaction beta-D-glucosyl-N-(9Z-octadecenoyl)-sphing-4E-enine + cholesterol = N-(9Z-octadecenoyl)-sphing-4-enine + cholesteryl 3-beta-D-glucoside. The catalysed reaction is beta-D-glucosyl-N-octanoylsphing-4E-enine + cholesterol = N-octanoylsphing-4-enine + cholesteryl 3-beta-D-glucoside. The enzyme catalyses beta-D-glucosyl-N-dodecanoylsphing-4-enine + cholesterol = N-dodecanoylsphing-4-enine + cholesteryl 3-beta-D-glucoside. It catalyses the reaction beta-D-glucosyl-(1&lt;-&gt;1)-N-octadecanoylsphing-4-enine + cholesterol = N-octadecanoylsphing-4-enine + cholesteryl 3-beta-D-glucoside. It carries out the reaction beta-D-glucosyl-(1&lt;-&gt;1')-N-(15Z-tetracosenoyl)-sphing-4-enine + cholesterol = N-(15Z-tetracosenoyl)-sphing-4-enine + cholesteryl 3-beta-D-glucoside. The catalysed reaction is a beta-D-galactosyl-(1&lt;-&gt;1')-N-acylsphing-4-enine + cholesterol = cholesteryl 3-beta-D-galactoside + an N-acylsphing-4-enine. The enzyme catalyses 1-(beta-D-galactosyl)-N-dodecanoylsphing-4-enine + cholesterol = cholesteryl 3-beta-D-galactoside + N-dodecanoylsphing-4-enine. It catalyses the reaction a beta-D-xylosyl-(1&lt;-&gt;1')-N-acylsphing-4-enine + cholesterol = cholesteryl 3-beta-D-xyloside + an N-acylsphing-4-enine. It carries out the reaction beta-D-xylosyl-(1&lt;-&gt;1')-N-(9Z-octadecenoyl)-sphing-4-enine + cholesterol = cholesteryl 3-beta-D-xyloside + N-(9Z-octadecenoyl)-sphing-4-enine. It participates in steroid metabolism; cholesterol metabolism. It functions in the pathway sphingolipid metabolism. In terms of biological role, glucosylceramidase that catalyzes, within the lysosomal compartment, the hydrolysis of glucosylceramides/GlcCers (such as beta-D-glucosyl-(1&lt;-&gt;1')-N-acylsphing-4-enine) into free ceramides (such as N-acylsphing-4-enine) and glucose. Plays a central role in the degradation of complex lipids and the turnover of cellular membranes. Through the production of ceramides, participates in the PKC-activated salvage pathway of ceramide formation. Catalyzes the glucosylation of cholesterol, through a transglucosylation reaction where glucose is transferred from GlcCer to cholesterol. GlcCer containing mono-unsaturated fatty acids (such as beta-D-glucosyl-N-(9Z-octadecenoyl)-sphing-4-enine) are preferred as glucose donors for cholesterol glucosylation when compared with GlcCer containing same chain length of saturated fatty acids (such as beta-D-glucosyl-N-octadecanoyl-sphing-4-enine). Under specific conditions, may alternatively catalyze the reverse reaction, transferring glucose from cholesteryl 3-beta-D-glucoside to ceramide. Can also hydrolyze cholesteryl 3-beta-D-glucoside producing glucose and cholesterol. Catalyzes the hydrolysis of galactosylceramides/GalCers (such as beta-D-galactosyl-(1&lt;-&gt;1')-N-acylsphing-4-enine), as well as the transfer of galactose between GalCers and cholesterol in vitro, but with lower activity than with GlcCers. Contrary to GlcCer and GalCer, xylosylceramide/XylCer (such as beta-D-xyosyl-(1&lt;-&gt;1')-N-acylsphing-4-enine) is not a good substrate for hydrolysis, however it is a good xylose donor for transxylosylation activity to form cholesteryl 3-beta-D-xyloside. The protein is Lysosomal acid glucosylceramidase (GBA1) of Pongo abelii (Sumatran orangutan).